A 220-amino-acid polypeptide reads, in one-letter code: Flavin-dependent thymidylate synthase (220 aa).

A ThyX domain is found at 1 to 208; that stretch reads MKIDILDKGF…PWTFEAFLKY (208 aa). FAD is bound by residues Thr55, 78 to 80, and Glu86; that span reads RHR. DUMP is bound by residues 75-78, 86-90, and Arg147; these read QWFR and ELSGR. A ThyX motif motif is present at residues 78 to 88; that stretch reads RHRIASYNELS. FAD-binding positions include 163-165 and Asn169; that span reads NAR. Arg174 serves as a coordination point for dUMP. The active-site Involved in ionization of N3 of dUMP, leading to its activation is the Arg174.

This sequence belongs to the thymidylate synthase ThyX family. Homotetramer. It depends on FAD as a cofactor.

The enzyme catalyses dUMP + (6R)-5,10-methylene-5,6,7,8-tetrahydrofolate + NADPH + H(+) = dTMP + (6S)-5,6,7,8-tetrahydrofolate + NADP(+). It participates in pyrimidine metabolism; dTTP biosynthesis. Functionally, catalyzes the reductive methylation of 2'-deoxyuridine-5'-monophosphate (dUMP) to 2'-deoxythymidine-5'-monophosphate (dTMP) while utilizing 5,10-methylenetetrahydrofolate (mTHF) as the methyl donor, and NADPH and FADH(2) as the reductant. The sequence is that of Flavin-dependent thymidylate synthase from Thermotoga petrophila (strain ATCC BAA-488 / DSM 13995 / JCM 10881 / RKU-1).